Consider the following 1888-residue polypeptide: Fatty acid synthase subunit alpha (1888 aa).

The tract at residues 98-118 is disordered; the sequence is DLAPVEEPNAEEQTGAAATPA. The 76-residue stretch at 146 to 221 folds into the Carrier domain; the sequence is VKASLLLHVL…ETFQDTFAGS (76 aa). O-(pantetheine 4'-phosphoryl)serine is present on Ser181. The interval 675–874 is beta-ketoacyl reductase; sequence DKYVLITGAG…CGAIIGWTRG (200 aa). Positions 1119–1657 constitute a Ketosynthase family 3 (KS3) domain; sequence KQMIQEVVIE…QKGAQAVAVH (539 aa). Catalysis depends on for beta-ketoacyl synthase activity residues Cys1305, His1542, and His1583. Mg(2+)-binding residues include Asp1774, Val1775, and Glu1776. Residues 1774-1776, Tyr1800, Ser1810, 1819-1829, 1843-1846, and 1873-1875 contribute to the acetyl-CoA site; these read DVE, EAVFKSLGVKS, REAG, and ISH. The Mg(2+) site is built by Ser1874 and His1875.

The protein belongs to the thiolase-like superfamily. Fungal fatty acid synthetase subunit alpha family. As to quaternary structure, fatty acid synthase is composed of alpha and beta subunits.

The enzyme catalyses acetyl-CoA + n malonyl-CoA + 2n NADPH + 4n H(+) = a long-chain-acyl-CoA + n CoA + n CO2 + 2n NADP(+).. It catalyses the reaction a fatty acyl-[ACP] + malonyl-[ACP] + H(+) = a 3-oxoacyl-[ACP] + holo-[ACP] + CO2. It carries out the reaction a (3R)-hydroxyacyl-[ACP] + NADP(+) = a 3-oxoacyl-[ACP] + NADPH + H(+). In terms of biological role, fatty acid synthetase catalyzes the formation of long-chain fatty acids from acetyl-CoA, malonyl-CoA and NADPH. The alpha subunit contains domains for: acyl carrier protein, 3-oxoacyl-[acyl-carrier-protein] reductase, and 3-oxoacyl-[acyl-carrier-protein] synthase. In this species, higher amounts of C18 than C16 fatty acids are produced. This Lachancea kluyveri (Yeast) protein is Fatty acid synthase subunit alpha (FAS2).